A 204-amino-acid polypeptide reads, in one-letter code: Probable 5-formyltetrahydrofolate cyclo-ligase (204 aa).

5–9 (KNQLR) contacts ATP. Substrate is bound by residues Glu-57, Trp-102, and 140-144 (HGKGY). ATP is bound by residues 139 to 146 (GHGKGYYD) and Asp-188.

The protein belongs to the 5-formyltetrahydrofolate cyclo-ligase family.

It carries out the reaction (6S)-5-formyl-5,6,7,8-tetrahydrofolate + ATP = (6R)-5,10-methenyltetrahydrofolate + ADP + phosphate. The sequence is that of Probable 5-formyltetrahydrofolate cyclo-ligase from Schizosaccharomyces pombe (strain 972 / ATCC 24843) (Fission yeast).